We begin with the raw amino-acid sequence, 92 residues long: Signal recognition particle 19 kDa protein (92 aa).

This sequence belongs to the SRP19 family. As to quaternary structure, part of the signal recognition particle protein translocation system, which is composed of SRP and FtsY. Archaeal SRP consists of a 7S RNA molecule of 300 nucleotides and two protein subunits: SRP54 and SRP19.

Its subcellular location is the cytoplasm. Functionally, involved in targeting and insertion of nascent membrane proteins into the cytoplasmic membrane. Binds directly to 7S RNA and mediates binding of the 54 kDa subunit of the SRP. The sequence is that of Signal recognition particle 19 kDa protein from Halobacterium salinarum (strain ATCC 29341 / DSM 671 / R1).